The following is a 459-amino-acid chain: E3 ubiquitin-protein ligase RNF25 (459 aa).

In terms of domain architecture, RWD spans 18–128 (SEVEVLESIY…EKGKEILTDN (111 aa)). Residues cysteine 135, cysteine 138, cysteine 153, histidine 155, histidine 158, cysteine 161, cysteine 198, and cysteine 201 each contribute to the Zn(2+) site. The RING-type zinc-finger motif lies at 135 to 202 (CVICLYGFQE…AVGVQCPVCR (68 aa)). Disordered stretches follow at residues 268-309 (PPAP…PPLP) and 322-459 (TRSN…KDGS). Residues 282–303 (KGSQPPSTLAAELSTSPAVQST) show a composition bias toward polar residues. 4 stretches are compositionally biased toward basic and acidic residues: residues 349–370 (QPER…RDTQ), 378–389 (PLKEPMDLKPEP), 413–424 (RTRDCVRWERSK), and 446–459 (TRRE…KDGS). Serine 450 bears the Phosphoserine mark.

This sequence belongs to the RNF25 family. As to quaternary structure, interacts with UBE2D2, and may also interact with UBE2E1 and UBE2E3. Interacts with RELA/p65. Ubiquitinated; autoubiquitinated.

Its subcellular location is the cytoplasm. It catalyses the reaction S-ubiquitinyl-[E2 ubiquitin-conjugating enzyme]-L-cysteine + [acceptor protein]-L-lysine = [E2 ubiquitin-conjugating enzyme]-L-cysteine + N(6)-ubiquitinyl-[acceptor protein]-L-lysine.. Its pathway is protein modification; protein ubiquitination. Functionally, E3 ubiquitin-protein ligase that plays a key role in the RNF14-RNF25 translation quality control pathway, a pathway that takes place when a ribosome has stalled during translation, and which promotes ubiquitination and degradation of translation factors on stalled ribosomes. Catalyzes ubiquitination of RPS27A in response to ribosome collisions, promoting activation of RNF14. RNF25 catalyzes ubiquitination of other ribosomal proteins on stalled ribosomes, such as RPL0, RPL1, RPL12, RPS13 and RPS17. Also involved in ubiquitination and degradation of stalled ETF1/eRF1. Independently of its function in the response to stalled ribosomes, mediates ubiquitination and subsequent proteasomal degradation of NKD2. May also stimulate transcription mediated by NF-kappa-B via its interaction with RELA/p65. In Homo sapiens (Human), this protein is E3 ubiquitin-protein ligase RNF25.